Consider the following 498-residue polypeptide: MRMNPTTSGSGVSTLEKKNLGRIVQIIGPVLDVSFPSGKMPNIYNALVVQGRDTVGQAINVTCEVQQLLGNNRVRAVAMSATDGLMRGMEVIDTGAPLSVPVGGATLGRIFNVLGEPVDELGPVDTRTTSPIHRSAPAFIQLDTKLSIFETGIKVVDLLAPYRRGGKIGLFGGAGVGKTVLIMELINNIAKAHGGVSVFGGVGERTREGNDLYMEMKESGVINEENIAESKVALVYGQMNEPPGARMRVGLTALTMAEYFRDVNEQDVLLFIDNIFRFVQAGSEVSALLGRMPSAVGYQPTLSTEMGTLQERITSTKEGSITSIQAVYVPADDLTDPAPATTFAHLDATTVLSRGLAAKGIYPAVDPLDSTSTMLQPRIVGEEHYKIAQRVKQTLQRYKELQDIIAILGLDELSEEDRLTVARARKIERFLSQPFFVAEVFTGSPGKYVGLAETIRGFQLILSGELDGLPEQAFYLVGNIDEATAKAMNLEMESNLKK.

Residue 172 to 179 (GGAGVGKT) coordinates ATP.

Belongs to the ATPase alpha/beta chains family. In terms of assembly, F-type ATPases have 2 components, CF(1) - the catalytic core - and CF(0) - the membrane proton channel. CF(1) has five subunits: alpha(3), beta(3), gamma(1), delta(1), epsilon(1). CF(0) has four main subunits: a(1), b(1), b'(1) and c(9-12).

The protein localises to the plastid. Its subcellular location is the chloroplast thylakoid membrane. It catalyses the reaction ATP + H2O + 4 H(+)(in) = ADP + phosphate + 5 H(+)(out). Functionally, produces ATP from ADP in the presence of a proton gradient across the membrane. The catalytic sites are hosted primarily by the beta subunits. This chain is ATP synthase subunit beta, chloroplastic, found in Jasminum nudiflorum (Winter jasmine).